A 382-amino-acid polypeptide reads, in one-letter code: Homeobox protein bagpipe (382 aa).

Disordered regions lie at residues 27–66 (NDIL…SKSP), 144–178 (TSND…KKRS), and 314–382 (QPIP…VEID). The span at 48 to 62 (EPEKLKPSSDRERSI) shows a compositional bias: basic and acidic residues. Positions 158 to 170 (SSPSESPLSHDGS) are enriched in low complexity. A DNA-binding region (homeobox) is located at residues 175 to 234 (KKRSRAAFSHAQVFELERRFAQQRYLSGPERSEMAKSLRLTETQVKIWFQNRRYKTKRKQ). The span at 321–335 (QSSSFVTASSASSSP) shows a compositional bias: low complexity. Residues 373-382 (EDVDENVEID) show a composition bias toward acidic residues.

Belongs to the NK-3 homeobox family. Is expressed in a segmented pattern in visceral muscle and in a subset of cardiac muscles. Loss of activity results in segmental gaps in midgut visceral muscle.

It localises to the nucleus. In terms of biological role, involved in the determination of cell fates in the dorsal mesoderm. The polypeptide is Homeobox protein bagpipe (bap) (Drosophila melanogaster (Fruit fly)).